Here is a 652-residue protein sequence, read N- to C-terminus: Sodium-dependent nutrient amino acid transporter 1 (652 aa).

The disordered stretch occupies residues 1 to 54 (MELKGVHQQNGTSNGTGAVGAEGESAPPTAPATAEAAASLETTTEKVDAEQQKP). The Cytoplasmic portion of the chain corresponds to 1–58 (MELKGVHQQNGTSNGTGAVGAEGESAPPTAPATAEAAASLETTTEKVDAEQQKPERTN). Polar residues predominate over residues 7–16 (HQQNGTSNGT). Positions 21 to 42 (AEGESAPPTAPATAEAAASLET) are enriched in low complexity. Positions 43 to 54 (TTEKVDAEQQKP) are enriched in basic and acidic residues. 4 helical membrane passes run 59–79 (WGNG…LGNV), 92–112 (GAFL…MYYL), 130–150 (VVPG…CIIT), and 155–175 (LLAL…PWSY). N-linked (GlcNAc...) asparagine glycans are attached at residues Asn-201 and Asn-204. The next 9 helical transmembrane spans lie at 240–260 (PDWK…LVIM), 269–289 (AAYF…VRAV), 318–338 (AVVQ…MFAS), 352–372 (IVTT…FAIL), 412–432 (LFSV…IVAL), 458–478 (ICGF…ILTL), 485–505 (TYVV…IYGM), 527–547 (CWSF…MVTI), and 564–584 (AGWL…MWYI).

The protein belongs to the sodium:neurotransmitter symporter (SNF) (TC 2.A.22) family.

The protein localises to the membrane. Its function is as follows. Unusual broad substrate spectrum amino acid:sodium cotransporter that promotes absorption of the D isomers of essential amino acids. Neutral amino acids are the preferred substrates, especially methionine and phenylalanine. This is Sodium-dependent nutrient amino acid transporter 1 from Drosophila persimilis (Fruit fly).